We begin with the raw amino-acid sequence, 658 residues long: Exoribonuclease 2 (658 aa).

The region spanning 189–531 is the RNB domain; sequence REDLTALHFI…NHRLIKAVLT (343 aa). An S1 motif domain is found at 576 to 658; it reads KPTFQAEIQD…ETRSIVGTLC (83 aa).

The protein belongs to the RNR ribonuclease family. RNase II subfamily.

It localises to the cytoplasm. It catalyses the reaction Exonucleolytic cleavage in the 3'- to 5'-direction to yield nucleoside 5'-phosphates.. In terms of biological role, involved in mRNA degradation. Hydrolyzes single-stranded polyribonucleotides processively in the 3' to 5' direction. The protein is Exoribonuclease 2 of Pasteurella multocida (strain Pm70).